A 716-amino-acid polypeptide reads, in one-letter code: DNA ligase (716 aa).

NAD(+) contacts are provided by residues 47–51 (DATYD), 96–97 (SL), and Glu-130. Lys-132 serves as the catalytic N6-AMP-lysine intermediate. NAD(+) is bound by residues Arg-153, Glu-190, Lys-306, and Lys-330. Positions 435, 438, 453, and 459 each coordinate Zn(2+). Residues 638–716 (RSDSAVAGKT…EDEWLKLIEG (79 aa)) enclose the BRCT domain.

This sequence belongs to the NAD-dependent DNA ligase family. LigA subfamily. Requires Mg(2+) as cofactor. The cofactor is Mn(2+).

The catalysed reaction is NAD(+) + (deoxyribonucleotide)n-3'-hydroxyl + 5'-phospho-(deoxyribonucleotide)m = (deoxyribonucleotide)n+m + AMP + beta-nicotinamide D-nucleotide.. Its function is as follows. DNA ligase that catalyzes the formation of phosphodiester linkages between 5'-phosphoryl and 3'-hydroxyl groups in double-stranded DNA using NAD as a coenzyme and as the energy source for the reaction. It is essential for DNA replication and repair of damaged DNA. The sequence is that of DNA ligase from Nitrobacter winogradskyi (strain ATCC 25391 / DSM 10237 / CIP 104748 / NCIMB 11846 / Nb-255).